We begin with the raw amino-acid sequence, 211 residues long: V-type ATP synthase subunit D (211 aa).

This sequence belongs to the V-ATPase D subunit family.

In terms of biological role, produces ATP from ADP in the presence of a proton gradient across the membrane. The sequence is that of V-type ATP synthase subunit D from Fusobacterium nucleatum subsp. nucleatum (strain ATCC 25586 / DSM 15643 / BCRC 10681 / CIP 101130 / JCM 8532 / KCTC 2640 / LMG 13131 / VPI 4355).